Consider the following 152-residue polypeptide: Large ribosomal subunit protein bL9 (152 aa).

Belongs to the bacterial ribosomal protein bL9 family.

Functionally, binds to the 23S rRNA. The chain is Large ribosomal subunit protein bL9 from Prochlorococcus marinus (strain NATL1A).